We begin with the raw amino-acid sequence, 923 residues long: DNA gyrase subunit A (923 aa).

Positions 34–534 (LPDARDGLKP…SQVDLTIADL (501 aa)) constitute a Topo IIA-type catalytic domain. Residue Tyr122 is the O-(5'-phospho-DNA)-tyrosine intermediate of the active site. The GyrA-box motif lies at 561 to 567 (QRRGGKG). The segment at 881–923 (ERVQEPSGGDDEDLPEGEEAAESLGESAESESEPAAEAEGNEE) is disordered. Acidic residues-rich tracts occupy residues 888–901 (GGDD…EEAA) and 908–923 (AESE…GNEE).

It belongs to the type II topoisomerase GyrA/ParC subunit family. In terms of assembly, heterotetramer, composed of two GyrA and two GyrB chains. In the heterotetramer, GyrA contains the active site tyrosine that forms a transient covalent intermediate with DNA, while GyrB binds cofactors and catalyzes ATP hydrolysis.

It is found in the cytoplasm. It carries out the reaction ATP-dependent breakage, passage and rejoining of double-stranded DNA.. A type II topoisomerase that negatively supercoils closed circular double-stranded (ds) DNA in an ATP-dependent manner to modulate DNA topology and maintain chromosomes in an underwound state. Negative supercoiling favors strand separation, and DNA replication, transcription, recombination and repair, all of which involve strand separation. Also able to catalyze the interconversion of other topological isomers of dsDNA rings, including catenanes and knotted rings. Type II topoisomerases break and join 2 DNA strands simultaneously in an ATP-dependent manner. This chain is DNA gyrase subunit A, found in Pseudomonas aeruginosa (strain ATCC 15692 / DSM 22644 / CIP 104116 / JCM 14847 / LMG 12228 / 1C / PRS 101 / PAO1).